Consider the following 329-residue polypeptide: DNA-directed RNA polymerase subunit alpha (329 aa).

The interval 1-235 (MQGSVTEFLK…EQLEAFVDLR (235 aa)) is alpha N-terminal domain (alpha-NTD). Residues 249 to 329 (FDPILLRPVD…DWPPASIADE (81 aa)) are alpha C-terminal domain (alpha-CTD).

Belongs to the RNA polymerase alpha chain family. As to quaternary structure, homodimer. The RNAP catalytic core consists of 2 alpha, 1 beta, 1 beta' and 1 omega subunit. When a sigma factor is associated with the core the holoenzyme is formed, which can initiate transcription.

It carries out the reaction RNA(n) + a ribonucleoside 5'-triphosphate = RNA(n+1) + diphosphate. Its function is as follows. DNA-dependent RNA polymerase catalyzes the transcription of DNA into RNA using the four ribonucleoside triphosphates as substrates. This is DNA-directed RNA polymerase subunit alpha from Salmonella choleraesuis (strain SC-B67).